Consider the following 86-residue polypeptide: Large ribosomal subunit protein uL23c (86 aa).

The protein belongs to the universal ribosomal protein uL23 family. Part of the 50S ribosomal subunit.

It localises to the plastid. The protein localises to the chloroplast. Its function is as follows. Binds to 23S rRNA. This Chlorella vulgaris (Green alga) protein is Large ribosomal subunit protein uL23c (rpl23).